We begin with the raw amino-acid sequence, 371 residues long: Diguanylate cyclase A (371 aa).

In terms of domain architecture, GGDEF spans 233-366; the sequence is ETLSILMIDI…GRNRVTLSKN (134 aa). 3 residues coordinate Mg(2+): Asp-241, Ile-242, and Glu-284. Glu-284 (proton acceptor) is an active-site residue.

As to quaternary structure, exists as a homodimer and as larger aggregates. Both dimers and aggregates possess DGC activity. It depends on Mg(2+) as a cofactor. The cofactor is Mn(2+).

It localises to the cytoplasm. The catalysed reaction is 2 GTP = 3',3'-c-di-GMP + 2 diphosphate. Its activity is regulated as follows. Allosterically regulated by a feedback inhibition loop. Catalyzes the conversion of GTP to cyclic-di-GMP (c-di-GMP). Shows activity under aerobic and anaerobic reaction conditions. The protein is Diguanylate cyclase A of Treponema denticola (strain ATCC 35405 / DSM 14222 / CIP 103919 / JCM 8153 / KCTC 15104).